The chain runs to 1070 residues: MILKENKKMFVLPEFGRIQFEGFQRFIHQDLVEELTNFPKIEDIDQEVEFRLFGERYRLTEPCIKERDAVYQSFTYSSDLYVPAQLMRRRNGRIQRQTVHFGSIPLMNSQGTFVINGIARVVINQILRSPGIYYDSELDHNGNSIYTGTIISDWGGRFKSEIDGKKRIWVRLSKNRKVSIIILLLAMGLNMNDILKNVRYPNIFLRLFQRQAENIQSYEDAIVELYKNLYSAGGNLVFSDSICKELQTKFFQQKFELGQFGRRNLNKKLNLDVPGNEHLLLPQDLLAAVDYLIGVNYGIGTLDDIDDLKNRRVRSVADLLREQLGLALDRLEILIRQTIHTVARRKRLVTPKGLITSAPLTTIFQDFFGSHSLSQFLDQTNPLAELTHKRRLSSLGPGGLTRRTASFQVRDINPSHYGRICPIETSEGMNAGLIASLAIHAKVNDRGSLLSPFYKISKTLGEEHIVYLSSEEDEYYRIATGNTLSLDREIREERATPARYRQEFLTIAWKQIHFRSIFPFQYFSIGTSLIPFLEHNDANRALMGSNMQRQAVPLSQPEKCIVGTGLESQIALDSGSVVVSNQDGQIAYLDGETISILLQNEKTVDIKSIIYERSNNNTCIHQRPVVSQGERLRKGQLLADGTATVGGELALGRNILVAYMPWEGYNFEDAVLISERLIYEDIYTSFHIERYEINIYTTSQGPEKITKEIPHLDSYVLRHLDNNGLVVPGSWVETGDVLVGKLTPQEAENSLRVPEGKLLQAISGIQLANTRESCLKVPIGGRGRVIDVRWIYDEDTLPNIANMVHVYILQKRKIQVGDKVAGRHGNKGIVSKILPRQDMPYLQDGTPVDMILSPLGVPSRMNVGQIFECLLGLAGDILKKHYRITPFDERYEREASRKLVFSELHEASQEAAIPWLFEPDHPGKSRLIDGRTGDIFEQPVTIGKAYMMKLIHQVDDKIHARSSGPYALVTQQPLRGRSRGGGQRVGEMEVWALEGFGVSYILQEMLTIKSDHIPARSKLLGSIVTGKSIPKPNTVPESFRLLVRELRSLAVNSDHNLIFEKDLRKKVKDV.

This sequence belongs to the RNA polymerase beta chain family. As to quaternary structure, in plastids the minimal PEP RNA polymerase catalytic core is composed of four subunits: alpha, beta, beta', and beta''. When a (nuclear-encoded) sigma factor is associated with the core the holoenzyme is formed, which can initiate transcription.

It localises to the plastid. Its subcellular location is the chloroplast. It catalyses the reaction RNA(n) + a ribonucleoside 5'-triphosphate = RNA(n+1) + diphosphate. Its function is as follows. DNA-dependent RNA polymerase catalyzes the transcription of DNA into RNA using the four ribonucleoside triphosphates as substrates. The chain is DNA-directed RNA polymerase subunit beta from Angiopteris evecta (Mule's foot fern).